We begin with the raw amino-acid sequence, 601 residues long: Elongation factor 4 (601 aa).

The region spanning E8–K189 is the tr-type G domain. GTP is bound at residue D20–T25.

This sequence belongs to the TRAFAC class translation factor GTPase superfamily. Classic translation factor GTPase family. LepA subfamily.

The protein localises to the cell membrane. The catalysed reaction is GTP + H2O = GDP + phosphate + H(+). Required for accurate and efficient protein synthesis under certain stress conditions. May act as a fidelity factor of the translation reaction, by catalyzing a one-codon backward translocation of tRNAs on improperly translocated ribosomes. Back-translocation proceeds from a post-translocation (POST) complex to a pre-translocation (PRE) complex, thus giving elongation factor G a second chance to translocate the tRNAs correctly. Binds to ribosomes in a GTP-dependent manner. This is Elongation factor 4 from Tropheryma whipplei (strain TW08/27) (Whipple's bacillus).